Here is a 172-residue protein sequence, read N- to C-terminus: AIG2-like protein B (172 aa).

Tyr-15–Glu-20 contributes to the substrate binding site. The Proton acceptor role is filled by Glu-83. Positions Lys-146–Asp-165 are enriched in basic and acidic residues. The segment at Lys-146 to Ser-172 is disordered.

This sequence belongs to the gamma-glutamylcyclotransferase family. In terms of tissue distribution, expressed in flowerss, leaves, stems, seeds and roots.

Its subcellular location is the cell membrane. Its function is as follows. Putative gamma-glutamylcyclotransferase. The polypeptide is AIG2-like protein B (Arabidopsis thaliana (Mouse-ear cress)).